Consider the following 148-residue polypeptide: Lysozyme C (148 aa).

An N-terminal signal peptide occupies residues 1 to 18; the sequence is MKALIVLGLVLLSVTVQG. The 130-residue stretch at 19 to 148 folds into the C-type lysozyme domain; the sequence is KVFERCELAR…VRQYVQGCGV (130 aa). Intrachain disulfides connect cysteine 24/cysteine 146, cysteine 48/cysteine 134, cysteine 83/cysteine 99, and cysteine 95/cysteine 113. Active-site residues include glutamate 53 and aspartate 71.

This sequence belongs to the glycosyl hydrolase 22 family. Monomer.

It localises to the secreted. It carries out the reaction Hydrolysis of (1-&gt;4)-beta-linkages between N-acetylmuramic acid and N-acetyl-D-glucosamine residues in a peptidoglycan and between N-acetyl-D-glucosamine residues in chitodextrins.. Functionally, lysozymes have primarily a bacteriolytic function; those in tissues and body fluids are associated with the monocyte-macrophage system and enhance the activity of immunoagents. The sequence is that of Lysozyme C (LYZ) from Homo sapiens (Human).